The primary structure comprises 241 residues: Demethylmenaquinone methyltransferase (241 aa).

S-adenosyl-L-methionine contacts are provided by residues Thr-60, Asp-81, and 106-107 (DA).

This sequence belongs to the class I-like SAM-binding methyltransferase superfamily. MenG/UbiE family.

It catalyses the reaction a 2-demethylmenaquinol + S-adenosyl-L-methionine = a menaquinol + S-adenosyl-L-homocysteine + H(+). It participates in quinol/quinone metabolism; menaquinone biosynthesis; menaquinol from 1,4-dihydroxy-2-naphthoate: step 2/2. Its function is as follows. Methyltransferase required for the conversion of demethylmenaquinol (DMKH2) to menaquinol (MKH2). The polypeptide is Demethylmenaquinone methyltransferase (Staphylococcus aureus (strain Mu3 / ATCC 700698)).